The chain runs to 695 residues: uncharacterized protein (695 aa).

Disordered stretches follow at residues 1 to 112 (MSRL…KHKK) and 242 to 262 (MKKV…NNDH). Low complexity predominate over residues 32–47 (DSSSSSDSPNFFPSSS). Residues 96-107 (KTEKEKEKEPIQ) show a composition bias toward basic and acidic residues. A tr-type G domain is found at 278-492 (KPRTKLLLLG…KIDKEADTNH (215 aa)). Residues 287–294 (GPPKSGKK), 357–361 (IFTTN), and 417–420 (TKMD) contribute to the GTP site.

Belongs to the TRAFAC class translation factor GTPase superfamily. Classic translation factor GTPase family.

It localises to the cytoplasm. The protein resides in the nucleus. This is an uncharacterized protein from Schizosaccharomyces pombe (strain 972 / ATCC 24843) (Fission yeast).